A 53-amino-acid polypeptide reads, in one-letter code: Lantibiotic paenibacillin (53 aa).

The propeptide occupies Met-1–Ala-24. Ala-24 carries the post-translational modification N-acetylalanine. Ser-25 is subject to 2,3-didehydroalanine (Ser). 2,3-didehydrobutyrine occurs at positions 29 and 30. Positions Ser-34–Cys-38 form a cross-link, lanthionine (Ser-Cys). 3 cross-links (beta-methyllanthionine (Thr-Cys)) span residues Thr-40–Cys-43, Thr-42–Cys-45, and Thr-46–Cys-49. A cross-link (lanthionine (Ser-Cys)) is located at residues Ser-48 to Cys-52. Position 50 is a 2,3-didehydroalanine (Ser) (Ser-50).

Maturation of lantibiotics involves the enzymatic conversion of Thr, and Ser into dehydrated AA and the formation of thioether bonds with cysteine. This is followed by membrane translocation and cleavage of the modified precursor. Post-translationally, the structure of the 2,3-didehydrobutyrines is not discussed in PubMed:17071789.

The protein resides in the secreted. In terms of biological role, lanthionine-containing peptide antibiotic (lantibiotic) active on Gram-positive bacteria. The bactericidal activity of lantibiotics is based on depolarization of energized bacterial cytoplasmic membranes, initiated by the formation of aqueous transmembrane pores. Lacks antibacterial activity against Gram-negative bacteria. The sequence is that of Lantibiotic paenibacillin from Paenibacillus polymyxa (Bacillus polymyxa).